Here is a 192-residue protein sequence, read N- to C-terminus: Ion-translocating oxidoreductase complex subunit B (192 aa).

The interval 1 to 26 (MEMIVIAVVALTLLALLFGMLLGYAS) is hydrophobic. The 4Fe-4S domain maps to 32 to 91 (EEDPVVDQVDELLPQSQCGQCGYPGCRPYAEAVANNGEQINRCVPGGEPVMQKIATLLNV). Residues Cys-49, Cys-52, Cys-57, Cys-74, Cys-117, Cys-120, Cys-123, Cys-127, Cys-147, Cys-150, Cys-153, and Cys-157 each coordinate [4Fe-4S] cluster. 4Fe-4S ferredoxin-type domains follow at residues 108–137 (MLAV…GATR) and 138–167 (AMHT…LRPA).

It belongs to the 4Fe4S bacterial-type ferredoxin family. RnfB subfamily. The complex is composed of six subunits: RnfA, RnfB, RnfC, RnfD, RnfE and RnfG. Requires [4Fe-4S] cluster as cofactor.

The protein localises to the cell inner membrane. In terms of biological role, part of a membrane-bound complex that couples electron transfer with translocation of ions across the membrane. This chain is Ion-translocating oxidoreductase complex subunit B, found in Cronobacter sakazakii (strain ATCC BAA-894) (Enterobacter sakazakii).